The primary structure comprises 294 residues: 1,4-dihydroxy-2-naphthoate octaprenyltransferase (294 aa).

A run of 6 helical transmembrane segments spans residues 35 to 55, 103 to 123, 140 to 160, 166 to 186, 220 to 240, and 272 to 292; these read SAVWWKALLALVVAVALVIGV, AGLALALLSAPWLIMVGATCI, GFGEVAVFVFFGLVAVLGTEY, VDWVGLVLAVSTGALSSSVLV, LLVATGVLTVVLMVATSWCAV, and GLAMVVWAIAVAGALTLAGSV.

Belongs to the MenA family. Type 1 subfamily.

It is found in the cell membrane. The catalysed reaction is an all-trans-polyprenyl diphosphate + 1,4-dihydroxy-2-naphthoate + H(+) = a 2-demethylmenaquinol + CO2 + diphosphate. The protein operates within quinol/quinone metabolism; menaquinone biosynthesis; menaquinol from 1,4-dihydroxy-2-naphthoate: step 1/2. Its function is as follows. Conversion of 1,4-dihydroxy-2-naphthoate (DHNA) to demethylmenaquinone (DMK). This is 1,4-dihydroxy-2-naphthoate octaprenyltransferase from Mycobacterium leprae (strain TN).